We begin with the raw amino-acid sequence, 530 residues long: Ubiquitin carboxyl-terminal hydrolase 17-like protein 24 (530 aa).

A USP domain is found at 80–375; that stretch reads AGLQNMGNTC…QAYVLFYIQK (296 aa). The Nucleophile role is filled by Cys89. The active-site Proton acceptor is the His334. Composition is skewed to basic and acidic residues over residues 382 to 392 and 398 to 412; these read SESVSRGREPR and DTDR…KRDH. 2 disordered regions span residues 382-412 and 477-530; these read SESV…KRDH and NHHP…LVCQ. Positions 493–505 are enriched in polar residues; that stretch reads TPTHQESMNTGTL. Basic residues predominate over residues 510 to 524; sequence GRARRSKGKNKHSKR.

This sequence belongs to the peptidase C19 family. USP17 subfamily. Expressed in heart, brain, liver and skeletal muscle.

The protein resides in the nucleus. Its subcellular location is the nucleolus. It localises to the endoplasmic reticulum. It carries out the reaction Thiol-dependent hydrolysis of ester, thioester, amide, peptide and isopeptide bonds formed by the C-terminal Gly of ubiquitin (a 76-residue protein attached to proteins as an intracellular targeting signal).. Deubiquitinating enzyme that removes conjugated ubiquitin from specific proteins to regulate different cellular processes that may include cell proliferation, progression through the cell cycle, apoptosis, cell migration, and the cellular response to viral infection. In Homo sapiens (Human), this protein is Ubiquitin carboxyl-terminal hydrolase 17-like protein 24 (USP17L24).